The primary structure comprises 87 residues: Small ribosomal subunit protein uS17 (87 aa).

The protein belongs to the universal ribosomal protein uS17 family. In terms of assembly, part of the 30S ribosomal subunit.

In terms of biological role, one of the primary rRNA binding proteins, it binds specifically to the 5'-end of 16S ribosomal RNA. This is Small ribosomal subunit protein uS17 from Bacillus cereus (strain ATCC 14579 / DSM 31 / CCUG 7414 / JCM 2152 / NBRC 15305 / NCIMB 9373 / NCTC 2599 / NRRL B-3711).